The sequence spans 1427 residues: Double-stranded DNA deaminase toxin A (1427 aa).

The next 2 membrane-spanning stretches (helical) occupy residues 16-36 (ALAG…AVAF) and 43-63 (FGVA…LLSI). YD repeat units lie at residues 469-501 (RVVE…DGRT), 548-584 (YDDA…GPDG), 720-747 (NARG…GRLR), and 977-1008 (YDGA…ISRA). Residues 1264–1427 (IGLNGGANVY…SPKSPTKGGC (164 aa)) form a C-terminal effector domain, has cytidine deaminase activity region. 3 residues coordinate Zn(2+): His1345, Cys1373, and Cys1376. Positions 1402-1427 (KRGATGETKVFTGNSNSPKSPTKGGC) are disordered. The segment covering 1412 to 1421 (FTGNSNSPKS) has biased composition (polar residues).

The protein belongs to the RHS/WapA nuclease family. As to quaternary structure, the toxic domain forms a 1:1 complex with the DddI immunity protein.

It is found in the membrane. It catalyses the reaction a 2'-deoxycytidine in double-stranded DNA + H2O + H(+) = a 2'-deoxyuridine in double-stranded DNA + NH4(+). In terms of biological role, toxic component of a toxin-immunity protein module, which functions as a cellular contact-dependent growth inhibition (CDI) system. CDI modules allow bacteria to communicate with and inhibit the growth of closely related neighboring bacteria in a contact-dependent fashion. Bacteria that have this module inhibit or kill bacteria without it, giving them a growth advantage. Probably specifically inhibited by cognate immunity protein DddI. The C-terminal 163 residue fragment has double-stranded DNA cytidine deaminase activity; it does not deaminate ssDNA, ssRNA or dsRNA. Leads to C:G to T:A conversions in deaminated DNA. Preferentially deaminates 5'-TC-3' substrates. This Burkholderia cenocepacia (strain H111) protein is Double-stranded DNA deaminase toxin A.